Reading from the N-terminus, the 175-residue chain is Ribosome-binding factor A (175 aa).

The disordered stretch occupies residues 129 to 175 (GAKPAGEADPYRDRGSADEPSDAGGLVIRTSDGLEAENTGDDYQAED). Acidic residues predominate over residues 162 to 175 (LEAENTGDDYQAED).

Belongs to the RbfA family. In terms of assembly, monomer. Binds 30S ribosomal subunits, but not 50S ribosomal subunits or 70S ribosomes.

The protein localises to the cytoplasm. In terms of biological role, one of several proteins that assist in the late maturation steps of the functional core of the 30S ribosomal subunit. Associates with free 30S ribosomal subunits (but not with 30S subunits that are part of 70S ribosomes or polysomes). Required for efficient processing of 16S rRNA. May interact with the 5'-terminal helix region of 16S rRNA. This Mycobacterium marinum (strain ATCC BAA-535 / M) protein is Ribosome-binding factor A.